We begin with the raw amino-acid sequence, 694 residues long: Methionine--tRNA ligase (694 aa).

Residues 12-22 carry the 'HIGH' region motif; that stretch reads PYANGPLHLGH. Residues C143, C146, C156, and C159 each coordinate Zn(2+). The short motif at 330–334 is the 'KMSKS' region element; it reads KMSKS. K333 contributes to the ATP binding site. Over residues 550–573 the composition is skewed to low complexity; the sequence is MAAPAAPATTTKPAPSKADAKPAA. A disordered region spans residues 550-582; it reads MAAPAAPATTTKPAPSKADAKPAAVANPESQTT. The region spanning 591–694 is the tRNA-binding domain; it reads DFAKLDLRIG…SGAQPGMPVR (104 aa).

The protein belongs to the class-I aminoacyl-tRNA synthetase family. MetG type 1 subfamily. In terms of assembly, homodimer. Zn(2+) is required as a cofactor.

Its subcellular location is the cytoplasm. The catalysed reaction is tRNA(Met) + L-methionine + ATP = L-methionyl-tRNA(Met) + AMP + diphosphate. In terms of biological role, is required not only for elongation of protein synthesis but also for the initiation of all mRNA translation through initiator tRNA(fMet) aminoacylation. The protein is Methionine--tRNA ligase of Xanthomonas euvesicatoria pv. vesicatoria (strain 85-10) (Xanthomonas campestris pv. vesicatoria).